A 215-amino-acid chain; its full sequence is Oligoribonuclease (215 aa).

In terms of domain architecture, Exonuclease spans Leu5–Leu170. Tyr127 is a catalytic residue. The tract at residues Leu196–Gly215 is disordered. Over residues Ala202–Gly215 the composition is skewed to low complexity.

Belongs to the oligoribonuclease family.

It localises to the cytoplasm. In terms of biological role, 3'-to-5' exoribonuclease specific for small oligoribonucleotides. The chain is Oligoribonuclease from Mycobacterium avium (strain 104).